A 428-amino-acid polypeptide reads, in one-letter code: E3 ubiquitin-protein ligase RNF128 (428 aa).

An N-terminal signal peptide occupies residues 1–38 (MGPPLGAGVSCRGGCGSSRLLAWCFLLALSPQAPGSRG). Residues Asn-48, Asn-59, and Asn-101 are each glycosylated (N-linked (GlcNAc...) asparagine). The 109-residue stretch at 75–183 (SPLEPVAGVL…LKGTKILQSI (109 aa)) folds into the PA domain. Residues 208–228 (IFFVSVSFFIITAATVGYFIF) form a helical membrane-spanning segment. The segment at 277–318 (CAVCIELYKPNDLVRILTCNHIFHKTCVDPWLLEHRTCPMCK) adopts an RING-type; atypical zinc-finger fold. Residues 346–428 (ISNSASSHEE…QETAVREIKS (83 aa)) form a disordered region. The span at 416–428 (TPHQETAVREIKS) shows a compositional bias: basic and acidic residues.

Auto-ubiquitinated. Controls the development of T-cell clonal anergy by ubiquitination.

The protein localises to the cytoplasm. Its subcellular location is the endomembrane system. It localises to the cytoskeleton. It is found in the perinuclear region. The enzyme catalyses S-ubiquitinyl-[E2 ubiquitin-conjugating enzyme]-L-cysteine + [acceptor protein]-L-lysine = [E2 ubiquitin-conjugating enzyme]-L-cysteine + N(6)-ubiquitinyl-[acceptor protein]-L-lysine.. It participates in protein modification; protein ubiquitination. Its function is as follows. E3 ubiquitin-protein ligase that catalyzes 'Lys-27', 'Lys-48'- or 'Lys-63'-linked polyubiquitin chains formation and plays a role in different biological processes such as modulation of immune response, cytoskeletal dynamics or protein homeostasis. Inhibits IL2 and IL4 transcription, thereby playing an important role in the induction of the anergic phenotype, a long-term stable state of T-lymphocyte unresponsiveness to antigenic stimulation associated with the blockade of interleukin production. Ubiquitinates ARPC5 with 'Lys-48' linkages and COR1A with 'Lys-63' linkages leading to their degradation, down-regulation of these cytoskeletal components results in impaired lamellipodium formation and reduced accumulation of F-actin at the immunological synapse. Functions in the patterning of the dorsal ectoderm; sensitizes ectoderm to respond to neural-inducing signals. Plays a positive role in innate immune response by promoting 'Lys-63'-linked ubiquitination of TBK1 after RNA- or DNA-virus infection. Regulates alveolar macrophage activation and neutrophil infiltration by interacting with TLR4, targeting it for degradation, and inhibiting NF-kappa-B activation, hence decreasing pro-inflammatory cytokines. Negatively regulates the IL-3/STAT5 signaling pathway by facilitating 'Lys-27'-linked polyubiquitination of IL3RA leading to its degradation via lysosomal pathway. Directly regulates the N-glycosylation process in the endoplasmic reticulum by targeting the glycosyl-transferase RPN1 for ubiquitination and degradation. Other substrates targeted for degradation by RNF128 include transmembrane proteins CD40L, CD83 or the tetraspanin CD151. The chain is E3 ubiquitin-protein ligase RNF128 (RNF128) from Pongo abelii (Sumatran orangutan).